The following is a 145-amino-acid chain: MIDINEILEILPHRFPFLLIDRVIDLQPGISIKAYKNVTFNEQIFQGHFPGHPIYPGVMIIEGMAQAGGVLAFKSTTDEDLSNKVVYFMTIDKAKFRQPIRPGDRLEYRLNVLKHRGRIWVLKGEALVDDKVAAEAELQAMIMDK.

Residue His-48 is part of the active site.

This sequence belongs to the thioester dehydratase family. FabZ subfamily.

Its subcellular location is the cytoplasm. It catalyses the reaction a (3R)-hydroxyacyl-[ACP] = a (2E)-enoyl-[ACP] + H2O. Functionally, involved in unsaturated fatty acids biosynthesis. Catalyzes the dehydration of short chain beta-hydroxyacyl-ACPs and long chain saturated and unsaturated beta-hydroxyacyl-ACPs. This is 3-hydroxyacyl-[acyl-carrier-protein] dehydratase FabZ from Campylobacter hominis (strain ATCC BAA-381 / DSM 21671 / CCUG 45161 / LMG 19568 / NCTC 13146 / CH001A).